Consider the following 506-residue polypeptide: CDK5 regulatory subunit-associated protein 3 (506 aa).

Short sequence motifs (shuffled ATG8-binding motif) lie at residues 267–270 (IDWG), 292–295 (IDWG), and 310–313 (IDWG). Residues 269-506 (WGDFGVEAVS…RPVNLMGTSL (238 aa)) are required for interaction with UFL1 and mediates interaction with CHEK1. The interval 355 to 370 (DELMELEIFLARRAVE) is RPL10a-binding domain (RBD). Lys-450 is covalently cross-linked (Glycyl lysine isopeptide (Lys-Gly) (interchain with G-Cter in SUMO2)).

It belongs to the CDK5RAP3 family. As to quaternary structure, substrate adapter component of the UFM1 ribosome E3 ligase (UREL) complex, composed of UFL1, DDRGK1 and CDK5RAP3. Interaction with UFL1 anchors CDK5RAP3 in the cytoplasm, preventing its translocation to the nucleus which allows expression of the CCND1 cyclin and progression of cells through the G1/S transition. Interacts with ATG8 family proteins MAP1LC3A, MAP1LC3B, GABARAP, GABARAPL1 and GABARAPL2. Interacts with CDK5R1; competes with CDK5RAP1 and CDK5RAP2. Interacts with RELA. Interacts with CHEK1; may negatively regulate CHEK1 and thereby stimulate entry into mitosis. Interacts with CDKN2A/ARF and MDM2; forms a ternary complex involved in regulation of p53/TP53. Interacts with MAPK14. Interacts with CCNB1. Interacts with TUBG1; may regulate CDK5RAP3 in mitotic G2/M transition checkpoint. May be phosphorylated by CDK5. Post-translationally, ubiquitinated. Probably triggers proteasomal degradation and is negatively regulated by UFL1. In terms of processing, may be ufmylated. Cleaved by caspases early during apoptosis, the resulting peptides may play a role in rupture of the nuclear envelope.

The protein resides in the endoplasmic reticulum membrane. Its subcellular location is the cytoplasm. It localises to the nucleus. It is found in the cytoskeleton. The protein localises to the microtubule organizing center. The protein resides in the centrosome. Substrate adapter of E3 ligase complexes mediating ufmylation, the covalent attachment of the ubiquitin-like modifier UFM1 to substrate proteins, and which is involved in various processes, such as ribosome recycling and reticulophagy (also called ER-phagy). As part of the UREL complex, plays a key role in ribosome recycling by promoting mono-ufmylation of RPL26/uL24 subunit of the 60S ribosome. Ufmylation of RPL26/uL24 occurs on free 60S ribosomes following ribosome dissociation: it weakens the junction between post-termination 60S subunits and SEC61 translocons, promoting release and recycling of the large ribosomal subunit from the endoplasmic reticulum membrane. Ufmylation of RPL26/uL24 and subsequent 60S ribosome recycling either take place after normal termination of translation or after ribosome stalling during cotranslational translocation at the endoplasmic reticulum. Within the UREL complex, CDK5RAP3 acts as a substrate adapter that constrains UFL1 ligase activity to mono-ufmylate RPL26/uL24 at 'Lys-134'. The UREL complex is also involved in reticulophagy in response to endoplasmic reticulum stress by promoting ufmylation of proteins such as CYB5R3, thereby promoting lysosomal degradation of ufmylated proteins. Also acts as a regulator of transcription: negatively regulates NF-kappa-B-mediated gene transcription through the control of RELA phosphorylation. Also regulates mitotic G2/M transition checkpoint and mitotic G2 DNA damage checkpoint. Through its interaction with CDKN2A/ARF and MDM2 may induce MDM2-dependent p53/TP53 ubiquitination, stabilization and activation in the nucleus, thereby promoting G1 cell cycle arrest and inhibition of cell proliferation. May also play a role in the rupture of the nuclear envelope during apoptosis. May regulate MAPK14 activity by regulating its dephosphorylation by PPM1D/WIP1. Required for liver development. The polypeptide is CDK5 regulatory subunit-associated protein 3 (Pongo abelii (Sumatran orangutan)).